A 425-amino-acid chain; its full sequence is Serine--tRNA ligase 1 (425 aa).

230–232 is an L-serine binding site; it reads TSE. ATP-binding positions include 261-263 and Val277; that span reads RRE. Position 284 (Glu284) interacts with L-serine. 348-351 contacts ATP; sequence ELTS. Thr382 contributes to the L-serine binding site.

The protein belongs to the class-II aminoacyl-tRNA synthetase family. Type-1 seryl-tRNA synthetase subfamily. Homodimer. The tRNA molecule binds across the dimer.

Its subcellular location is the cytoplasm. The catalysed reaction is tRNA(Ser) + L-serine + ATP = L-seryl-tRNA(Ser) + AMP + diphosphate + H(+). The enzyme catalyses tRNA(Sec) + L-serine + ATP = L-seryl-tRNA(Sec) + AMP + diphosphate + H(+). It participates in aminoacyl-tRNA biosynthesis; selenocysteinyl-tRNA(Sec) biosynthesis; L-seryl-tRNA(Sec) from L-serine and tRNA(Sec): step 1/1. Functionally, catalyzes the attachment of serine to tRNA(Ser). Is also able to aminoacylate tRNA(Sec) with serine, to form the misacylated tRNA L-seryl-tRNA(Sec), which will be further converted into selenocysteinyl-tRNA(Sec). The polypeptide is Serine--tRNA ligase 1 (Streptomyces avermitilis (strain ATCC 31267 / DSM 46492 / JCM 5070 / NBRC 14893 / NCIMB 12804 / NRRL 8165 / MA-4680)).